A 131-amino-acid chain; its full sequence is Glycine cleavage system H protein (131 aa).

In terms of domain architecture, Lipoyl-binding spans 24 to 106; the sequence is TVTIGITDHA…YEDGWIIKLK (83 aa). N6-lipoyllysine is present on lysine 65.

The protein belongs to the GcvH family. In terms of assembly, the glycine cleavage system is composed of four proteins: P, T, L and H. It depends on (R)-lipoate as a cofactor.

Functionally, the glycine cleavage system catalyzes the degradation of glycine. The H protein shuttles the methylamine group of glycine from the P protein to the T protein. This is Glycine cleavage system H protein from Chromohalobacter salexigens (strain ATCC BAA-138 / DSM 3043 / CIP 106854 / NCIMB 13768 / 1H11).